A 1138-amino-acid chain; its full sequence is uncharacterized protein (1138 aa).

Disordered stretches follow at residues 985-1015 (EKKLPTHETNSEIEKEKHSDGKRKESKMAQE) and 1094-1138 (LVAT…QNKL). The segment covering 1110 to 1138 (DDDEYEKYDSGIEDIETDVDEEEEVQNKL) has biased composition (acidic residues).

This is an uncharacterized protein from Ostreid herpesvirus 1 (isolate France) (OsHV-1).